We begin with the raw amino-acid sequence, 490 residues long: Glutamate--tRNA ligase (490 aa).

A 'HIGH' region motif is present at residues Pro-12–Leu-22. Positions Lys-256–Arg-260 match the 'KMSKS' region motif. Position 259 (Lys-259) interacts with ATP.

This sequence belongs to the class-I aminoacyl-tRNA synthetase family. Glutamate--tRNA ligase type 1 subfamily. As to quaternary structure, monomer.

It localises to the cytoplasm. The enzyme catalyses tRNA(Glu) + L-glutamate + ATP = L-glutamyl-tRNA(Glu) + AMP + diphosphate. Catalyzes the attachment of glutamate to tRNA(Glu) in a two-step reaction: glutamate is first activated by ATP to form Glu-AMP and then transferred to the acceptor end of tRNA(Glu). The polypeptide is Glutamate--tRNA ligase (Mycobacterium sp. (strain KMS)).